A 331-amino-acid polypeptide reads, in one-letter code: Large ribosomal subunit protein uL3 (331 aa).

Belongs to the universal ribosomal protein uL3 family. In terms of assembly, part of the 50S ribosomal subunit. Forms a cluster with proteins L14 and L24e.

Its function is as follows. One of the primary rRNA binding proteins, it binds directly near the 3'-end of the 23S rRNA, where it nucleates assembly of the 50S subunit. The chain is Large ribosomal subunit protein uL3 from Archaeoglobus fulgidus (strain ATCC 49558 / DSM 4304 / JCM 9628 / NBRC 100126 / VC-16).